We begin with the raw amino-acid sequence, 477 residues long: Ribulose bisphosphate carboxylase large chain (477 aa).

Positions 1 to 2 (MS) are excised as a propeptide. Residue proline 3 is modified to N-acetylproline. N6,N6,N6-trimethyllysine is present on lysine 14. Positions 123 and 173 each coordinate substrate. The active-site Proton acceptor is lysine 175. Lysine 177 is a binding site for substrate. Lysine 201, aspartate 203, and glutamate 204 together coordinate Mg(2+). N6-carboxylysine is present on lysine 201. Histidine 294 serves as the catalytic Proton acceptor. Residues arginine 295, histidine 327, and serine 379 each coordinate substrate.

This sequence belongs to the RuBisCO large chain family. Type I subfamily. Heterohexadecamer of 8 large chains and 8 small chains; disulfide-linked. The disulfide link is formed within the large subunit homodimers. It depends on Mg(2+) as a cofactor. In terms of processing, the disulfide bond which can form in the large chain dimeric partners within the hexadecamer appears to be associated with oxidative stress and protein turnover.

The protein localises to the plastid. It localises to the chloroplast. The catalysed reaction is 2 (2R)-3-phosphoglycerate + 2 H(+) = D-ribulose 1,5-bisphosphate + CO2 + H2O. It carries out the reaction D-ribulose 1,5-bisphosphate + O2 = 2-phosphoglycolate + (2R)-3-phosphoglycerate + 2 H(+). In terms of biological role, ruBisCO catalyzes two reactions: the carboxylation of D-ribulose 1,5-bisphosphate, the primary event in carbon dioxide fixation, as well as the oxidative fragmentation of the pentose substrate in the photorespiration process. Both reactions occur simultaneously and in competition at the same active site. This chain is Ribulose bisphosphate carboxylase large chain, found in Solanum bulbocastanum (Wild potato).